Reading from the N-terminus, the 898-residue chain is Interleukin enhancer-binding factor 3 (898 aa).

The 374-residue stretch at 5 to 378 (RIFVNDDRHV…PMKRPMEEDG (374 aa)) folds into the DZF domain. Residues 52-85 (QEKGNSELSEAENMDTPPDDESKEGAGEQKAEHM) are disordered. Positions 60–73 (SEAENMDTPPDDES) are enriched in acidic residues. T67 is subject to Phosphothreonine. Basic and acidic residues predominate over residues 74–85 (KEGAGEQKAEHM). Residue K100 is modified to N6-acetyllysine. Position 188 is a phosphothreonine; by PKR (T188). S190 is subject to Phosphoserine. A Glycyl lysine isopeptide (Lys-Gly) (interchain with G-Cter in ubiquitin) cross-link involves residue K297. At T315 the chain carries Phosphothreonine; by PKR. A Glycyl lysine isopeptide (Lys-Gly) (interchain with G-Cter in SUMO1) cross-link involves residue K348. The tract at residues 363–402 (TTYAITPMKRPMEEDGEEKSPSKKKKKIQKKEEKADPPQA) is disordered. Residues 371-389 (KRPMEEDGEEKSPSKKKKK) carry the Bipartite nuclear localization signal motif. A compositionally biased stretch (basic and acidic residues) spans 372-383 (RPMEEDGEEKSP). Phosphoserine occurs at positions 382 and 384. K396 participates in a covalent cross-link: Glycyl lysine isopeptide (Lys-Gly) (interchain with G-Cter in SUMO2). Positions 398 to 467 (DPPQAMNALM…AVKVLQDMGL (70 aa)) constitute a DRBM 1 domain. The residue at position 460 (K460) is an N6-acetyllysine. Disordered regions lie at residues 466–495 (GLPT…IVAP) and 505–524 (PSSV…LTKH). The span at 472 to 481 (EGRDSSKGED) shows a compositional bias: basic and acidic residues. A phosphoserine mark is found at S476, S477, S482, and S486. K489 participates in a covalent cross-link: Glycyl lysine isopeptide (Lys-Gly) (interchain with G-Cter in SUMO2). The DRBM 2 domain occupies 524–590 (HGKNPVMELN…ALAALEKLFP (67 aa)). A Phosphothreonine modification is found at T592. Residues 609-898 (RGGPKFAAKP…TEHSMNYQYR (290 aa)) form an interaction with PRMT1 region. Disordered stretches follow at residues 631–661 (NEVP…GGAN) and 719–898 (QGDS…YQYR). Positions 644 to 661 (RGGNIRGRGRGRGFGGAN) are enriched in gly residues. Composition is skewed to low complexity over residues 745–769 (SYSS…SSYG), 783–794 (GSYSSYSNSYNS), and 802–812 (DYSYDSKFNYS). 4 positions are modified to phosphoserine: S794, S812, S814, and S818. Residues 813-822 (GSGGRSGGNS) are compositionally biased toward gly residues. Low complexity predominate over residues 823–834 (YGSSGSSSYNTG). The segment covering 835-845 (SHGGYGTGSGG) has biased composition (gly residues). The segment covering 846–886 (SSSYQGKQGGYSSQSNYSSPGSSQSYSGPASSYQSSQGGYS) has biased composition (low complexity).

In terms of assembly, identified in a IGF2BP1-dependent mRNP granule complex containing untranslated mRNAs. Interacts with FUS and SMN. Interacts (via C-terminus) with PRMT1. Forms a complex with ILF2. Can also bind to PRKDC/XRCC7: this may stabilize the interaction of PRKDC/XRCC7 and the heterodimeric complex of XRCC6/KU70 and XRCC5/KU80. Forms a heteromeric complex with ZNF346 and ILF3. Found in a nuclear export complex with XPO5, ILF3, Ran and double-stranded RNA or double-stranded minihelix VA1 RNA. Found in a nuclear export complex with XPO5, RAN, ILF3, ZNF346 and double-stranded RNA. Interacts with XPO5 and ZNF346. Forms a complex with ILF2, YLPM1, KHDRBS1, RBMX, NCOA5 and PPP1CA. Interacts with AGO1 and AGO2. Interacts with DHX36; this interaction occurs in a RNA-dependent manner. Interacts with ELAVL1; this interaction occurs in a RNA-dependent manner. Interacts with HAVCR2; this interaction promotes ILF3 ubiquitination and subsequent degradation. Phosphorylated at Thr-188 and Thr-315 by PKR in response to RNA viruses. This phosphorylation results in the dissociation of ILF2 from the ILF2-ILF3 complex resulting in a cytoplasmic sequestration of ILF3 where it can bind to viral RNAs and impede viral replication. In terms of processing, methylated by protein arginine N-methyltransferase 1. In terms of tissue distribution, ubiquitous. Expressed at high levels in the thymus, testis, ovary and at lower levelss in the spleen.

Its subcellular location is the nucleus. The protein resides in the nucleolus. It localises to the cytoplasm. RNA-binding protein that plays an essential role in the biogenesis of circular RNAs (circRNAs) which are produced by back-splicing circularization of pre-mRNAs. Within the nucleus, promotes circRNAs processing by stabilizing the regulatory elements residing in the flanking introns of the circularized exons. Plays thereby a role in the back-splicing of a subset of circRNAs. As a consequence, participates in a wide range of transcriptional and post-transcriptional processes. Binds to poly-U elements and AU-rich elements (AREs) in the 3'-UTR of target mRNAs. Upon viral infection, ILF3 accumulates in the cytoplasm and participates in the innate antiviral response. Mechanistically, ILF3 becomes phosphorylated and activated by the double-stranded RNA-activated protein kinase/PKR which releases ILF3 from cellular mature circRNAs. In turn, unbound ILF3 molecules are able to interact with and thus inhibit viral mRNAs. This Mus musculus (Mouse) protein is Interleukin enhancer-binding factor 3 (Ilf3).